We begin with the raw amino-acid sequence, 388 residues long: Carbamoyl phosphate synthase small chain (388 aa).

Residues 1–194 (MAQNPLSKPT…WPEGYARQEA (194 aa)) form a CPSase region. Positions 53, 246, and 248 each coordinate L-glutamine. A Glutamine amidotransferase type-1 domain is found at 198–387 (KVVAIDYGAK…AAAMDAQKAE (190 aa)). Residue C276 is the Nucleophile of the active site. Residues L277, Q280, N318, G320, and F321 each contribute to the L-glutamine site. Residues H360 and E362 contribute to the active site.

This sequence belongs to the CarA family. As to quaternary structure, composed of two chains; the small (or glutamine) chain promotes the hydrolysis of glutamine to ammonia, which is used by the large (or ammonia) chain to synthesize carbamoyl phosphate. Tetramer of heterodimers (alpha,beta)4.

The catalysed reaction is hydrogencarbonate + L-glutamine + 2 ATP + H2O = carbamoyl phosphate + L-glutamate + 2 ADP + phosphate + 2 H(+). It catalyses the reaction L-glutamine + H2O = L-glutamate + NH4(+). The protein operates within amino-acid biosynthesis; L-arginine biosynthesis; carbamoyl phosphate from bicarbonate: step 1/1. It participates in pyrimidine metabolism; UMP biosynthesis via de novo pathway; (S)-dihydroorotate from bicarbonate: step 1/3. In terms of biological role, small subunit of the glutamine-dependent carbamoyl phosphate synthetase (CPSase). CPSase catalyzes the formation of carbamoyl phosphate from the ammonia moiety of glutamine, carbonate, and phosphate donated by ATP, constituting the first step of 2 biosynthetic pathways, one leading to arginine and/or urea and the other to pyrimidine nucleotides. The small subunit (glutamine amidotransferase) binds and cleaves glutamine to supply the large subunit with the substrate ammonia. This is Carbamoyl phosphate synthase small chain from Ruegeria pomeroyi (strain ATCC 700808 / DSM 15171 / DSS-3) (Silicibacter pomeroyi).